We begin with the raw amino-acid sequence, 702 residues long: Elongation factor G (702 aa).

The 283-residue stretch at 8 to 290 (SRYRNIGISA…AVIEYLPSPT (283 aa)) folds into the tr-type G domain. GTP is bound by residues 17–24 (AHIDAGKT), 88–92 (DTPGH), and 142–145 (NKMD).

It belongs to the TRAFAC class translation factor GTPase superfamily. Classic translation factor GTPase family. EF-G/EF-2 subfamily.

The protein localises to the cytoplasm. Functionally, catalyzes the GTP-dependent ribosomal translocation step during translation elongation. During this step, the ribosome changes from the pre-translocational (PRE) to the post-translocational (POST) state as the newly formed A-site-bound peptidyl-tRNA and P-site-bound deacylated tRNA move to the P and E sites, respectively. Catalyzes the coordinated movement of the two tRNA molecules, the mRNA and conformational changes in the ribosome. The chain is Elongation factor G from Edwardsiella ictaluri (strain 93-146).